A 212-amino-acid chain; its full sequence is Ribosomal RNA small subunit methyltransferase G (212 aa).

S-adenosyl-L-methionine-binding positions include glycine 80, leucine 85, 131-132 (AE), and arginine 146.

This sequence belongs to the methyltransferase superfamily. RNA methyltransferase RsmG family.

It is found in the cytoplasm. It catalyses the reaction guanosine(527) in 16S rRNA + S-adenosyl-L-methionine = N(7)-methylguanosine(527) in 16S rRNA + S-adenosyl-L-homocysteine. In terms of biological role, specifically methylates the N7 position of guanine in position 527 of 16S rRNA. The sequence is that of Ribosomal RNA small subunit methyltransferase G from Xanthomonas campestris pv. campestris (strain 8004).